A 267-amino-acid chain; its full sequence is Zinc finger protein ZAT1 (267 aa).

The segment at 5 to 27 adopts a C2H2-type 1 zinc-finger fold; the sequence is HKCKLCWKSFANGRALGGHMRSH. Disordered stretches follow at residues 34-99 and 181-204; these read PSQP…ADIK and SHKK…KKKS. Residues 52-62 are compositionally biased toward basic and acidic residues; that stretch reads QDRESETESSK. Basic residues predominate over residues 63–73; it reads KPSRKRSRLNR. Basic and acidic residues predominate over residues 83 to 97; the sequence is QSNEEGKSETARAAD. 2 C2H2-type zinc fingers span residues 160 to 182 and 209 to 231; these read FECE…RASH and HECP…KRSH.

The protein resides in the nucleus. Functionally, probable transcription factor that may be involved in stress responses. The chain is Zinc finger protein ZAT1 (ZAT1) from Arabidopsis thaliana (Mouse-ear cress).